Here is a 136-residue protein sequence, read N- to C-terminus: Large-conductance mechanosensitive channel (136 aa).

Over 1-16 (MGLLSEFKAFAVKGNV) the chain is Cytoplasmic. Residues 17 to 45 (VDMAVGIIIGAAFGKIVSSFVGDVIMPPI) traverse the membrane as a helical segment. Residues 46-73 (GLLIGGVDFSDLAITLKAEGDVPAVVLA) are Extracellular-facing. Residues 74–93 (YRKFIQTVLNFVIVAFAIFM) traverse the membrane as a helical segment. The Cytoplasmic portion of the chain corresponds to 94 to 136 (GVKAINRLKREEAVAPSEPPVPSAEETLLTEIRDLLKAQQNKS).

It belongs to the MscL family. In terms of assembly, homopentamer.

It is found in the cell inner membrane. Functionally, channel that opens in response to stretch forces in the membrane lipid bilayer. Forms a nonselective ion channel with a conductance of about 4 nanosiemens. May participate in the regulation of osmotic pressure changes within the cell. This chain is Large-conductance mechanosensitive channel, found in Pseudomonas fluorescens.